A 34-amino-acid polypeptide reads, in one-letter code: Photosystem II reaction center protein M (34 aa).

The helical transmembrane segment at 5-25 threads the bilayer; sequence ILALIAIALFISVPTAFLIII.

The protein belongs to the PsbM family. In terms of assembly, PSII is composed of 1 copy each of membrane proteins PsbA, PsbB, PsbC, PsbD, PsbE, PsbF, PsbH, PsbI, PsbJ, PsbK, PsbL, PsbM, PsbT, PsbX, PsbY, PsbZ, Psb30/Ycf12, at least 3 peripheral proteins of the oxygen-evolving complex and a large number of cofactors. It forms dimeric complexes.

The protein localises to the plastid. It is found in the chloroplast thylakoid membrane. One of the components of the core complex of photosystem II (PSII). PSII is a light-driven water:plastoquinone oxidoreductase that uses light energy to abstract electrons from H(2)O, generating O(2) and a proton gradient subsequently used for ATP formation. It consists of a core antenna complex that captures photons, and an electron transfer chain that converts photonic excitation into a charge separation. This subunit is found at the monomer-monomer interface. The protein is Photosystem II reaction center protein M of Gnetum parvifolium (Small-leaved jointfir).